The sequence spans 550 residues: DNA mismatch repair protein MutL (550 aa).

This sequence belongs to the DNA mismatch repair MutL/HexB family.

Its function is as follows. This protein is involved in the repair of mismatches in DNA. It is required for dam-dependent methyl-directed DNA mismatch repair. May act as a 'molecular matchmaker', a protein that promotes the formation of a stable complex between two or more DNA-binding proteins in an ATP-dependent manner without itself being part of a final effector complex. In Microcystis aeruginosa (strain NIES-843 / IAM M-2473), this protein is DNA mismatch repair protein MutL.